The primary structure comprises 600 residues: Elongation factor 4 (600 aa).

The tr-type G domain occupies 7 to 189; it reads SLIRNFSIIA…ALVQRLPAPT (183 aa). GTP is bound by residues 19 to 24 and 136 to 139; these read DHGKST and NKID.

It belongs to the TRAFAC class translation factor GTPase superfamily. Classic translation factor GTPase family. LepA subfamily.

The protein localises to the cell inner membrane. The catalysed reaction is GTP + H2O = GDP + phosphate + H(+). Functionally, required for accurate and efficient protein synthesis under certain stress conditions. May act as a fidelity factor of the translation reaction, by catalyzing a one-codon backward translocation of tRNAs on improperly translocated ribosomes. Back-translocation proceeds from a post-translocation (POST) complex to a pre-translocation (PRE) complex, thus giving elongation factor G a second chance to translocate the tRNAs correctly. Binds to ribosomes in a GTP-dependent manner. This chain is Elongation factor 4, found in Gluconobacter oxydans (strain 621H) (Gluconobacter suboxydans).